The chain runs to 613 residues: Putative two-component response regulator ARR21 (613 aa).

The Response regulatory domain maps to 17–131 (NVMVVDDDHV…DLTKIYQFAL (115 aa)). Asp68 is subject to 4-aspartylphosphate. Polar residues predominate over residues 178–195 (KSDSRTVNSTNGSCVSTD). A disordered region spans residues 178–223 (KSDSRTVNSTNGSCVSTDGSRKNRKRKPNGGPSDDGESMSQPAKKK). A Nuclear localization signal motif is present at residues 221–224 (KKKK). The myb-like GARP DNA-binding region spans 224–274 (KIQWTDSLHDLFLQAIRHIGLDKAVPKKILAFMSVPYLTRENVASHLQKYR).

It belongs to the ARR family. Type-B subfamily. In terms of assembly, binds the target DNA as a monomer. Post-translationally, two-component system major event consists of a His-to-Asp phosphorelay between a sensor histidine kinase (HK) and a response regulator (RR). In plants, the His-to-Asp phosphorelay involves an additional intermediate named Histidine-containing phosphotransfer protein (HPt). This multistep phosphorelay consists of a His-Asp-His-Asp sequential transfer of a phosphate group between first a His and an Asp of the HK protein, followed by the transfer to a conserved His of the HPt protein and finally the transfer to an Asp in the receiver domain of the RR protein. In terms of tissue distribution, mainly expressed in siliques. Also found in germinating seedlings, stems, flowers and roots, but not in rosette leaves.

The protein localises to the nucleus. Functionally, putative transcriptional activator that binds specifically to the DNA sequence 5'-[AG]GATT-3'. Functions as a response regulator involved in His-to-Asp phosphorelay signal transduction system. Phosphorylation of the Asp residue in the receiver domain activates the ability of the protein to promote the transcription of target genes. Could directly activate some type-A response regulators in response to cytokinins. This is Putative two-component response regulator ARR21 (ARR21) from Arabidopsis thaliana (Mouse-ear cress).